We begin with the raw amino-acid sequence, 72 residues long: Protein CYSTEINE-RICH TRANSMEMBRANE MODULE 1 (72 aa).

Positions 1-11 (MSQYDHNQSAG) are enriched in polar residues. A disordered region spans residues 1–46 (MSQYDHNQSAGANPPPPMSTCTSPPPPIGYPTNQPSHGSVAQGKVE). The span at 13 to 29 (NPPPPMSTCTSPPPPIG) shows a compositional bias: pro residues. Residues 49-65 (SKGDGFFKGCLAAMCCC) traverse the membrane as a helical segment.

It belongs to the CYSTM1 family. Heterodimers. Binds weakly to CYSTM7 and WIH1/CYSTM13. Mostly expressed in roots, flowers and siliques and, to a lower extent, in stems and leaves.

It localises to the cell membrane. The protein localises to the nucleus. Its function is as follows. May be involved in aluminium (Al) tolerance. Involved in resistance to abiotic stress. The polypeptide is Protein CYSTEINE-RICH TRANSMEMBRANE MODULE 1 (Arabidopsis thaliana (Mouse-ear cress)).